The primary structure comprises 219 residues: Acetylxylan esterase (219 aa).

S15 functions as the Nucleophile in the catalytic mechanism. Active-site charge relay system residues include D191 and H194.

This sequence belongs to the 'GDSL' lipolytic enzyme family. As to quaternary structure, homooctamer, presenting a unique donut-shaped quaternary structure built of two staggered tetrameric rings. The eight active sites are organized in four closely situated pairs, which face the relatively wide internal cavity.

The protein resides in the cytoplasm. It carries out the reaction Deacetylation of xylans and xylo-oligosaccharides.. The protein operates within glycan degradation; xylan degradation. In terms of biological role, acetylxylan esterase involved in the degradation of xylan, a major structural heterogeneous polysaccharide found in plant biomass representing the second most abundant polysaccharide in the biosphere, after cellulose. Cleaves acetyl side groups from the xylose backbone units of the hemicellulolytic polymer xylan and xylo-oligosaccharides. Hydrolyzes about 20%-30% of the available acetyl groups on fully acetylated birch wood xylan. Completely deacetylates xylobiose peracetate (fully acetylated), and is active on both the alpha- and beta-forms of the sugar. Also hydrolyzes fully acetylated methyl-beta-D-xylopyranoside and methyl-beta-D-glucopyranoside, and the synthetic substrates 2-naphthyl acetate, 4-nitrophenyl acetate, 4-methylumbelliferyl acetate, and phenyl acetate. The protein is Acetylxylan esterase of Geobacillus stearothermophilus (Bacillus stearothermophilus).